We begin with the raw amino-acid sequence, 875 residues long: Translation initiation factor IF-2 (875 aa).

Disordered stretches follow at residues 1-20 (MSDSDKKPTLGRRPLGLKTA), 47-102 (LMGR…LREA), and 126-246 (EEER…DRRG). The span at 54–66 (AAPTAAPAAAATP) shows a compositional bias: low complexity. Over residues 67–85 (APTPVAPPPPPPPPPPPPS) the composition is skewed to pro residues. Composition is skewed to basic and acidic residues over residues 88 to 102 (RETRQEMQVRLLREA) and 126 to 140 (EEERRRAEEKARAEA). Composition is skewed to low complexity over residues 141–195 (EAAA…PAAP) and 202–221 (PAAPAVPAPRRFTPVAPAAP). Residues 223–246 (KRPELAAKKPAHPQRDRKTEDRRG) are compositionally biased toward basic and acidic residues. The tr-type G domain occupies 374–544 (ARPPVVTIMG…LLQAELLELK (171 aa)). Residues 383–390 (GHVDHGKT) form a G1 region. 383-390 (GHVDHGKT) lines the GTP pocket. The interval 408–412 (GITQH) is G2. Residues 430-433 (DTPG) are G3. Residues 430-434 (DTPGH) and 484-487 (TKAD) contribute to the GTP site. Residues 484 to 487 (TKAD) are G4. A G5 region spans residues 520–522 (SAK).

The protein belongs to the TRAFAC class translation factor GTPase superfamily. Classic translation factor GTPase family. IF-2 subfamily.

Its subcellular location is the cytoplasm. One of the essential components for the initiation of protein synthesis. Protects formylmethionyl-tRNA from spontaneous hydrolysis and promotes its binding to the 30S ribosomal subunits. Also involved in the hydrolysis of GTP during the formation of the 70S ribosomal complex. The polypeptide is Translation initiation factor IF-2 (Novosphingobium aromaticivorans (strain ATCC 700278 / DSM 12444 / CCUG 56034 / CIP 105152 / NBRC 16084 / F199)).